Here is a 1508-residue protein sequence, read N- to C-terminus: MRRNDLKPFYLAGMLELCLLAAPAAHAQTSATRQLVEQGNYWHDQGRDDLAADTWKKLLGIDPDQPDALLGLAQIDLAQGRQSEARKRLQQLEGAHPQSPQAQRLRVAIGARGSSSAGEDSNLRNARRAASAGRYVEAARSYEAAFAGKPPPPNLALEYYQSLAGTPTGWERARDGLRRLQSSDPDNPSVQLALAQVLSYREPTRRDGIAQLRTLAQRADVGGPARSSWRQALLWLNAGMADAPLYQAFLAGTPNDAEVTAKLGQLRAQRTTATTPADPNGVLLGEGFRALSANNLSAAEQRFTQVLRARARDPEALGGLGSVRLRQQRFAEAQELLRPAAAGNGKWRNALESARYWQQLQQAETARARGDLAQARQLIEQAVQLLPNEPAGHVALGDLQAAGDPVAAEASYRKALARDADNAGALQGLVGLYSRQGRLQEASALFDRLPAAERAKSGGQALLRSNVQRARARQFLDAGDAVSAQTELEAAMVERPGDAWIRLDLARLYQQAGRPDQARSVMDGLLAVHGDQPEALHANALLAQESGDWQGAYDSLDRIPAAARTPAMTQLRATAWIELQARQARQLVAQGRVGEAQQLLARTDTALGNQLDDPQLLAALAGAHADAGNTQRALVLAQRLVTGASPRIEDRLQYASVLLRAHQDAELSAVLRQLQATTMTPEQLRRYQGLRSAYTLRQVDALRELGNLEGAYDALSPVLAQQPGNRDAQAALARLYAAAGEHRQALAIYQQILQRQPSDLDTLTAAANSAAAQSDLRDAERYLQRALAQAPESPDVLAAAGRVYRSAGKNRKAEQYFRAALAAQQRQAGQLDNGLASARGLAAVAASGRPLNPFSGMTGAMPRSPAMLSERMAAGSAYNDVATAPVAYIAPLAMQPGAARVATAAPVNAAADLSSDALPQPVRASTVPSTLPAPSRLRASTHGALPAVSGSDLQPRNIAAQALSARSSGNSVLDELRAVQAENSDGLAGGALYRARDGEDGLGRLDDIEMPVQAEFAVGEGKLGVTLTPTVVDAGTLGTDYATASRFGTGPQSAIGDALAANRGPIDTLVDSPVYQLLATEGDTAATRERLRRYALNTGLFNALLVENNNSTAAALAALANEPLPAYLLSINASNTPIGQLARDILGNAALSEQLGAGDAAALRALAGSTAAAQQTPTGLADTLNAMAASGNGSRRLSQDDTGVGVGVRYRNGGFSAELGSTPIGFQEQNLIGGVGYRGELGDTVSWSAEASRRAVTDSVLSFAGAQDARSGRQWGGVTSTGLSLSATADNGLLGGYANLAAHRLQGNNVADNDHRQVDLGFYVHALETEHQSLTAGVNLTTMQYDKNLSGFTYGHGGYFSPQDYVDLGFPVHWSGRTAGQTVNWKVDASVGVQHFSTEASPYFPTDPTLQQAAYDAASLAALLGLVDRYTDPVYASESRTGVSYNLSGAAEWQVAPQLFLGGRLTFNNARDYNQFSSNLYLRFVMDRLGAALGRAPQVLASPYAAEH.

An N-terminal signal peptide occupies residues 1–27 (MRRNDLKPFYLAGMLELCLLAAPAAHA). TPR repeat units lie at residues 32–65 (TRQLVEQGNYWHDQGRDDLAADTWKKLLGIDPDQ), 119–152 (EDSNLRNARRAASAGRYVEAARSYEAAFAGKPPP), 314–347 (PEALGGLGSVRLRQQRFAEAQELLRPAAAGNGKW), 354–389 (ARYWQQLQQAETARARGDLAQARQLIEQAVQLLPNE), 391–422 (AGHVALGDLQAAGDPVAAEASYRKALARDADN), 423–456 (AGALQGLVGLYSRQGRLQEASALFDRLPAAERAK), 499–532 (AWIRLDLARLYQQAGRPDQARSVMDGLLAVHGDQ), 692–725 (SAYTLRQVDALRELGNLEGAYDALSPVLAQQPGN), 726–759 (RDAQAALARLYAAAGEHRQALAIYQQILQRQPSD), 761–793 (DTLTAAANSAAAQSDLRDAERYLQRALAQAPES), and 794–827 (PDVLAAAGRVYRSAGKNRKAEQYFRAALAAQQRQ).

Belongs to the AcsC/BcsC family.

It functions in the pathway glycan metabolism; bacterial cellulose biosynthesis. Its function is as follows. Required for maximal bacterial cellulose synthesis. This Xanthomonas axonopodis pv. citri (strain 306) protein is Cellulose synthase operon protein C (bcsC).